The following is a 62-amino-acid chain: AEGCDRRFSASDELTRHIRIHTGHKPFQCAICMRNFSRSDHLTTHIRTHTGEKPFACDYCGR.

3 C2H2-type zinc fingers span residues 1–21 (AEGC…IRIH), 27–49 (FQCA…IRTH), and 55–62 (FACDYCGR).

It belongs to the EGR C2H2-type zinc-finger protein family. As to quaternary structure, interacts with HCFC1. Interacts with WWP2. Interacts with UBC9. Interacts with CITED1. Interacts (via phosphorylated form) with SFN. Ubiquitinated by WWP2 leading to proteasomal degradation. In terms of processing, acetylated. May be deacetylated by HDAC6, HDAC10 or SIRT1.

The protein resides in the nucleus. It participates in protein modification; protein sumoylation. In terms of biological role, sequence-specific DNA-binding transcription factor. Plays a role in hindbrain segmentation by regulating the expression of a subset of homeobox containing genes and in Schwann cell myelination by regulating the expression of genes involved in the formation and maintenance of myelin. Binds to two EGR2-consensus sites EGR2A (5'-CTGTAGGAG-3') and EGR2B (5'-ATGTAGGTG-3') in the HOXB3 enhancer and promotes HOXB3 transcriptional activation. Binds to specific DNA sites located in the promoter region of HOXA4, HOXB2 and ERBB2. Regulates hindbrain segmentation by controlling the expression of Hox genes, such as HOXA4, HOXB3 and HOXB2, and thereby specifying odd and even rhombomeres. Promotes the expression of HOXB3 in the rhombomere r5 in the hindbrain. Regulates myelination in the peripheral nervous system after birth, possibly by regulating the expression of myelin proteins, such as MPZ, and by promoting the differentiation of Schwann cells. Involved in the development of the jaw openener musculature, probably by playing a role in its innervation through trigeminal motor neurons. May play a role in adipogenesis, possibly by regulating the expression of CEBPB. Functionally, E3 SUMO-protein ligase helping SUMO1 conjugation to its coregulators NAB1 and NAB2, whose sumoylation down-regulates EGR2 transcriptional activity. The chain is E3 SUMO-protein ligase EGR2 (EGR2) from Cerdocyon thous (Crab-eating fox).